A 309-amino-acid chain; its full sequence is MPIRVPDELPAVNFLREENVFVMTTSRASGQEIRPLKVLILNLMPKKIETENQFLRLLSNSPLQVDIQLLRIDSRESRNTPAEHLNNFYCNFEDIQDQNFDGLIVTGAPLGLVEFNDVAYWPQIKQVLEWSKDHVTSTLFVCWAVQAALNILYGIPKQTRTEKLSGVYEHHILHPHALLTRGFDDSFLAPHSRYADFPAALIRDYTDLEILAETEEGDAYLFASKDKRIAFVTGHPEYDAQTLAQEFFRDVEAGLDPDVPYNYFPHNDPQNTPRASWRSHGNLLFTNWLNYYVYQITPYDLRHMNPTLD.

The Acyl-thioester intermediate role is filled by Cys142. The substrate site is built by Lys163 and Ser192. Catalysis depends on His235, which acts as the Proton acceptor. Glu237 is a catalytic residue. Arg249 serves as a coordination point for substrate.

This sequence belongs to the MetA family. Homodimer.

Its subcellular location is the cytoplasm. It catalyses the reaction L-homoserine + succinyl-CoA = O-succinyl-L-homoserine + CoA. The protein operates within amino-acid biosynthesis; L-methionine biosynthesis via de novo pathway; O-succinyl-L-homoserine from L-homoserine: step 1/1. In terms of biological role, transfers a succinyl group from succinyl-CoA to L-homoserine, forming succinyl-L-homoserine. This is Homoserine O-succinyltransferase from Escherichia coli (strain K12 / MC4100 / BW2952).